The primary structure comprises 713 residues: Cyclomaltodextrin glucanotransferase (713 aa).

The signal sequence occupies residues 1 to 27; sequence MKKISKLTTALALSLSLALSLLGPAHA. Residues 28 to 165 are A1; it reads APDTSVSNKQ…NIKVIIDFAP (138 aa). Residues D54, N56, N59, and N60 each contribute to the Ca(2+) site. A disulfide bond links C70 and C77. Residues G78 and D80 each contribute to the Ca(2+) site. 127–128 is a binding site for substrate; sequence YW. Ca(2+) is bound at residue N166. The tract at residues 166–229 is b; that stretch reads NHTSPASLDQ…NLYDLADLNH (64 aa). A substrate-binding site is contributed by H167. A Ca(2+)-binding site is contributed by I217. 220-223 lines the substrate pocket; it reads NLYD. A Ca(2+)-binding site is contributed by D226. Residues 230 to 433 are A2; the sequence is NNSTVDTYLK…LRKSNPAIAY (204 aa). R254 serves as a coordination point for substrate. D256 functions as the Nucleophile in the catalytic mechanism. Residue 259–260 participates in substrate binding; sequence KH. H260 is a binding site for Ca(2+). E284 serves as the catalytic Proton donor. Substrate is bound by residues H354, D398, and R402. The interval 434–522 is c; it reads GTTQERWINN…GTAVWQYTTA (89 aa). Residues 523-609 form a d region; it reads VTAPTIGHVG…SNVHDNFEVL (87 aa). Positions 526-607 constitute an IPT/TIG domain; it reads PTIGHVGPMM…TSSNVHDNFE (82 aa). The 106-residue stretch at 608–713 folds into the CBM20 domain; it reads VLSGDQVSVR…TATINVNWQP (106 aa). Residues 610-713 are e; that stretch reads SGDQVSVRFV…TATINVNWQP (104 aa).

This sequence belongs to the glycosyl hydrolase 13 family. In terms of assembly, monomer. Requires Ca(2+) as cofactor.

The protein localises to the secreted. The catalysed reaction is Cyclizes part of a (1-&gt;4)-alpha-D-glucan chain by formation of a (1-&gt;4)-alpha-D-glucosidic bond.. In Bacillus sp. (strain 17-1), this protein is Cyclomaltodextrin glucanotransferase (cgt).